Consider the following 427-residue polypeptide: 2-oxoglutarate and iron-dependent oxygenase JMJD4 (427 aa).

Positions 147-306 (SLVNDLEDIF…NMWHFLQQEL (160 aa)) constitute a JmjC domain. H194, D196, and H274 together coordinate Fe cation.

This sequence belongs to the JMJD6 family. In terms of assembly, interacts with ETF1. Interacts with the ETF1-GSPT1 complex. Fe(2+) is required as a cofactor.

It localises to the cytoplasm. It catalyses the reaction L-lysyl-[protein] + 2-oxoglutarate + O2 = 4-hydroxy-L-lysyl-[protein] + succinate + CO2. Functionally, catalyzes the 2-oxoglutarate and iron-dependent C4-lysyl hydroxylation of ETF1 at 'Lys-63' thereby promoting the translational termination efficiency of ETF1. Not essential for embryonic stem cell (ESC) maintenance and the embryonic and postnatal development. The sequence is that of 2-oxoglutarate and iron-dependent oxygenase JMJD4 (Jmjd4) from Mus musculus (Mouse).